The chain runs to 172 residues: Protein-export protein SecB (172 aa).

It belongs to the SecB family. As to quaternary structure, homotetramer, a dimer of dimers. One homotetramer interacts with 1 SecA dimer.

It is found in the cytoplasm. Functionally, one of the proteins required for the normal export of preproteins out of the cell cytoplasm. It is a molecular chaperone that binds to a subset of precursor proteins, maintaining them in a translocation-competent state. It also specifically binds to its receptor SecA. In Xylella fastidiosa (strain Temecula1 / ATCC 700964), this protein is Protein-export protein SecB.